The sequence spans 215 residues: Histone H1.1 (215 aa).

The interval 1-43 (MSETVPPAPAASAAPEKPLAGKKAKKPAKAAAASKKKPAGPSV) is disordered. The residue at position 2 (Ser2) is an N-acetylserine. Ser2 and Ser12 each carry phosphoserine. Lys17 carries the post-translational modification N6-acetyllysine. A compositionally biased stretch (basic residues) spans 20-38 (AGKKAKKPAKAAAASKKKP). Lys37 is subject to N6-(beta-hydroxybutyryl)lysine. Residues 39 to 112 (AGPSVSELIV…GASGSFKLNK (74 aa)) enclose the H15 domain. Ser44 bears the Phosphoserine mark. Residue Lys55 is modified to N6-(beta-hydroxybutyryl)lysine. Arg57 carries the post-translational modification Citrulline. Lys67 carries the post-translational modification N6-(beta-hydroxybutyryl)lysine. Lys78 is modified (N6-acetyllysine). An N6-(beta-hydroxybutyryl)lysine modification is found at Lys88. Lys93 is subject to N6-(beta-hydroxybutyryl)lysine; alternate. Lys93 bears the N6-acetyllysine; alternate mark. The tract at residues 94–215 (GTLVQTKGTG…KPKKAAPKKK (122 aa)) is disordered. Ser107 carries the phosphoserine modification. Lys109 is subject to N6-(beta-hydroxybutyryl)lysine. The span at 122-147 (GASKVATKTKATGASKKLKKATGASK) shows a compositional bias: low complexity. The residue at position 125 (Lys125) is an N6-acetyllysine. 2 stretches are compositionally biased toward basic residues: residues 148–181 (KSVK…KKVA) and 188–215 (KAVK…PKKK). The residue at position 204 (Thr204) is a Phosphothreonine.

The protein belongs to the histone H1/H5 family. As to quaternary structure, interacts with DFFB. H1 histones are progressively phosphorylated during the cell cycle, becoming maximally phosphorylated during late G2 phase and M phase, and being dephosphorylated sharply thereafter. Post-translationally, citrullination at Arg-57 (H1R54ci) by PADI4 takes place within the DNA-binding site of H1 and results in its displacement from chromatin and global chromatin decondensation, thereby promoting pluripotency and stem cell maintenance.

It is found in the nucleus. It localises to the chromosome. Functionally, histone H1 protein binds to linker DNA between nucleosomes forming the macromolecular structure known as the chromatin fiber. Histones H1 are necessary for the condensation of nucleosome chains into higher-order structured fibers. Also acts as a regulator of individual gene transcription through chromatin remodeling, nucleosome spacing and DNA methylation. In Homo sapiens (Human), this protein is Histone H1.1.